The following is a 263-amino-acid chain: Alpha-tubulin N-acetyltransferase 2 (263 aa).

Positions 1-181 (MEIAFDLSSI…NKYAVFPNFF (181 aa)) constitute an N-acetyltransferase domain. 115-128 (FFIVPTEQRSGNGF) is an acetyl-CoA binding site. Disordered regions lie at residues 191-224 (TPRQTKRASRASSAVSSHTTSRNTSPIGRNRPRH) and 236-263 (FPRGRSVIDPNSPAGFKLTRDQRHEPIW). Positions 200-212 (RASSAVSSHTTSR) are enriched in low complexity. Positions 253–263 (LTRDQRHEPIW) are enriched in basic and acidic residues.

It belongs to the acetyltransferase ATAT1 family.

It catalyses the reaction L-lysyl-[alpha-tubulin] + acetyl-CoA = N(6)-acetyl-L-lysyl-[alpha-tubulin] + CoA + H(+). Specifically acetylates 'Lys-40' in alpha-tubulin/mec-12 on the lumenal side of microtubules. Promotes microtubule destabilization and accelerates microtubule dynamics; this activity may be independent of acetylation activity. Acetylates alpha-tubulin with a slow enzymatic rate, due to a catalytic site that is not optimized for acetyl transfer. Enters the microtubule through each end and diffuses quickly throughout the lumen of microtubules. Acetylates only long/old microtubules because of its slow acetylation rate since it does not have time to act on dynamically unstable microtubules before the enzyme is released. Required for the maintenance of touch receptor neurons and possibly other type of neurons involved in locomotion. This chain is Alpha-tubulin N-acetyltransferase 2 (atat-2), found in Caenorhabditis briggsae.